We begin with the raw amino-acid sequence, 226 residues long: Transmembrane protein 204 (226 aa).

The Cytoplasmic portion of the chain corresponds to 1–5 (MTVQR). The helical transmembrane segment at 6 to 26 (LVAAAVLVALVSLILNNVAAF) threads the bilayer. Residues 27 to 103 (TSNWVCQTLE…LQFDMMRACN (77 aa)) lie on the Extracellular side of the membrane. A helical membrane pass occupies residues 104–124 (LVATAALTAGQLTFLLGLVGL). Residues 125 to 136 (PLLSPDAPCWEE) lie on the Cytoplasmic side of the membrane. The helical transmembrane segment at 137 to 157 (AMAAAFQLASFVLVIGLVTFY) threads the bilayer. Residues 158–170 (RIGPYTNLSWSCY) lie on the Extracellular side of the membrane. Asparagine 164 carries an N-linked (GlcNAc...) asparagine glycan. The chain crosses the membrane as a helical span at residues 171 to 191 (LNIGACLLATLAAAMLIWNIL). Residues 192 to 226 (HKREDCMAPRVIVISRSLTARFRRGLDNDYVESPC) are Cytoplasmic-facing.

As to expression, highly expressed in lung, heart, kidney and placenta. Lower expression in thymus, spleen, liver, testis and ovary. Expressed in endothelial and restricted epithelial cell populations.

The protein resides in the cell junction. It localises to the adherens junction. The protein localises to the cell membrane. Its function is as follows. Can influence paracellular permeability. Appears to be involved in cell-cell interactions through adherens. The sequence is that of Transmembrane protein 204 (TMEM204) from Homo sapiens (Human).